A 130-amino-acid polypeptide reads, in one-letter code: uncharacterized protein (130 aa).

This is an uncharacterized protein from Sulfolobus islandicus filamentous virus (isolate Iceland/Hveragerdi) (SIFV).